The primary structure comprises 207 residues: Ras-related protein Rab-8B (207 aa).

GTP contacts are provided by serine 17, glycine 18, valine 19, glycine 20, lysine 21, threonine 22, cysteine 23, threonine 35, serine 39, and threonine 40. Threonine 22 is a Mg(2+) binding site. Short sequence motifs (switch) lie at residues 31–45 and 63–80; these read DAFN…GIDF and DTAG…YYRG. Positions 40 and 63 each coordinate Mg(2+). Residue glycine 66 coordinates GTP. Threonine 72 bears the Phosphothreonine mark. GTP-binding residues include asparagine 121, lysine 122, aspartate 124, alanine 152, and lysine 153. Phosphoserine occurs at positions 180 and 183. Cysteine 204 carries the post-translational modification Cysteine methyl ester. Cysteine 204 is lipidated: S-geranylgeranyl cysteine. The propeptide at 205–207 is removed in mature form; the sequence is LLL.

This sequence belongs to the small GTPase superfamily. Rab family. As to quaternary structure, associated with actin, delta-catenin and alpha and beta tubulins. Interacts with OTOF. Interacts with PEX5R. Interacts with RAB3IP. Interacts with VIM. Interacts with CDH1. Interacts with MICALL2. Interacts with GDI1, GDI2, CHML and CHM; phosphorylation at Thr-72 disrupts these interactions. Interacts with MICAL1. Mg(2+) is required as a cofactor. Phosphorylation of Thr-72 in the switch II region by LRRK2 prevents the association of RAB regulatory proteins, including CHM, CHML and RAB GDP dissociation inhibitors GDI1 and GDI2.

Its subcellular location is the cell membrane. It localises to the cytoplasmic vesicle. The protein resides in the phagosome membrane. It is found in the endosome membrane. The catalysed reaction is GTP + H2O = GDP + phosphate + H(+). Its activity is regulated as follows. Regulated by guanine nucleotide exchange factors (GEFs) including RAB3IP/RABIN8 which promotes the exchange of bound GDP for free GTP. Regulated by GTPase activating proteins (GAPs) which increase the GTP hydrolysis activity. Inhibited by GDP dissociation inhibitors (GDIs). Functionally, the small GTPases Rab are key regulators of intracellular membrane trafficking, from the formation of transport vesicles to their fusion with membranes. Rabs cycle between an inactive GDP-bound form and an active GTP-bound form that is able to recruit to membranes different sets of downstream effectors directly responsible for vesicle formation, movement, tethering and fusion. RAB8B may be involved in polarized vesicular trafficking and neurotransmitter release. May participate in cell junction dynamics in Sertoli cells. May also participate in the export of a subset of neosynthesized proteins through a Rab8-Rab10-Rab11-dependent endososomal export route. This is Ras-related protein Rab-8B (RAB8B) from Bos taurus (Bovine).